The primary structure comprises 227 residues: UPF0173 metal-dependent hydrolase STK_14180 (227 aa).

This sequence belongs to the UPF0173 family.

This Sulfurisphaera tokodaii (strain DSM 16993 / JCM 10545 / NBRC 100140 / 7) (Sulfolobus tokodaii) protein is UPF0173 metal-dependent hydrolase STK_14180.